The following is a 93-amino-acid chain: Small ribosomal subunit protein uS19 (93 aa).

Belongs to the universal ribosomal protein uS19 family.

In terms of biological role, protein S19 forms a complex with S13 that binds strongly to the 16S ribosomal RNA. In Clostridium acetobutylicum (strain ATCC 824 / DSM 792 / JCM 1419 / IAM 19013 / LMG 5710 / NBRC 13948 / NRRL B-527 / VKM B-1787 / 2291 / W), this protein is Small ribosomal subunit protein uS19.